Here is a 556-residue protein sequence, read N- to C-terminus: HIRA-interacting protein 3 (556 aa).

Phosphoserine is present on Ser-27. Residues Asp-64–Lys-77 show a composition bias toward basic and acidic residues. Positions Asp-64–Val-426 are disordered. Thr-84 carries the phosphothreonine modification. Phosphoserine is present on residues Ser-87, Ser-98, Ser-100, Ser-125, Ser-142, Ser-143, Ser-159, and Ser-160. A compositionally biased stretch (low complexity) spans Glu-99–Ser-108. Basic and acidic residues predominate over residues Pro-126–Glu-158. Basic residues predominate over residues Lys-168–Val-177. A phosphoserine mark is found at Ser-196, Ser-199, Ser-223, and Ser-227. The span at Lys-209–Glu-224 shows a compositional bias: basic and acidic residues. Positions Glu-240 to Lys-254 are enriched in acidic residues. The span at Arg-260 to Ser-269 shows a compositional bias: basic residues. 2 positions are modified to phosphoserine: Ser-289 and Ser-291. Basic and acidic residues predominate over residues Asp-304–Gln-322. Phosphoserine occurs at positions 330, 332, 333, and 357. The residue at position 358 (Thr-358) is a Phosphothreonine. 4 positions are modified to phosphoserine: Ser-359, Ser-363, Ser-370, and Ser-372. Residues Arg-385 to Thr-396 show a composition bias toward basic residues. The segment at Ser-403–Thr-527 is interaction with the histone H2A-H2B complex. Position 471 is a phosphothreonine (Thr-471). Residues Ser-502–Asn-556 are disordered. Basic and acidic residues predominate over residues Leu-523 to Arg-536. Phosphoserine is present on residues Ser-530, Ser-550, Ser-551, and Ser-555.

Interacts (via C-terminus) with histone H2A-H2B dimers; the interaction is direct. Interacts with HIRA. Interacts with CK2. Post-translationally, phosphorylated by CK2. In terms of tissue distribution, widely expressed. Isoform 1 is predominant in skeletal muscle. Isoform 2 is predominant in liver and heart.

The protein resides in the nucleus. Its function is as follows. Histone chaperone that carries a H2A-H2B histone complex and facilitates its deposition onto chromatin. The chain is HIRA-interacting protein 3 (HIRIP3) from Homo sapiens (Human).